Here is a 5233-residue protein sequence, read N- to C-terminus: E3 ubiquitin-protein ligase highwire (5233 aa).

The interval 197-230 (VVGGPGLPAEKRPRRDSANSDADSDTEEPTEREP) is disordered. Basic and acidic residues predominate over residues 205–214 (AEKRPRRDSA). A phosphoserine mark is found at Ser-213 and Ser-216. RCC1 repeat units lie at residues 615 to 666 (NGRV…ALLV), 669 to 724 (DGTV…FVTK), and 768 to 818 (KGQL…DKRL). The interval 680-700 (RGEDGDSSKNRRQPKAVKPKK) is disordered. The segment covering 689–700 (NRRQPKAVKPKK) has biased composition (basic residues). The segment at 900-950 (TELKPPPSDVQQRQQRSKTLIMRRKERKGELETGAAGGGAATPTDLDKDPP) is disordered. Positions 908–917 (DVQQRQQRSK) are enriched in polar residues. RCC1 repeat units follow at residues 931-983 (ETGA…VLTL), 984-1033 (AGEV…LLTS), and 1035-1084 (GMVY…TVAP). Disordered stretches follow at residues 1051–1109 (LPSD…EMPP) and 1287–1327 (AAAA…PPQL). The span at 1092 to 1103 (RSQSPANVQPSG) shows a compositional bias: polar residues. Over residues 1287–1302 (AAAAAVAAPGTPVSAG) the composition is skewed to low complexity. Residues 1436–1587 (NRFDNFGGGW…GQIPAILYRL (152 aa)) form a PHR domain 1 region. The interval 1681–1718 (SSTSVATGGGSNAAHGSGVVTTAKSVQSKPNKDKNTPR) is disordered. The span at 1699–1709 (VVTTAKSVQSK) shows a compositional bias: polar residues. The segment at 2014-2169 (ARFARCDVSR…GQLPCILYYS (156 aa)) is PHR domain 2. 2 disordered regions span residues 2329-2353 (SADLRNGQSQSVSQSQSQSQSVPIN) and 2580-2604 (NGAGDRRRNTGGGIAGSGAAPNTHQ). Residues 2336 to 2350 (QSQSVSQSQSQSQSV) show a composition bias toward low complexity. The tract at residues 2885 to 4082 (AEVSAPGPNL…FVSSLNPTGG (1198 aa)) is required for interaction with Rae1. Residues 2906 to 3000 (WGGMAPPPRI…LEEVYRVDVK (95 aa)) form a Filamin repeat. Disordered stretches follow at residues 3005–3024 (PPPTQRNSAQRRPQAPSKLR), 3117–3210 (KGVG…EPEQ), 3277–3333 (GGQD…ASET), 3348–3378 (TTTGQGEQQSELQLATTSTASSASKRNPMGP), 3551–3587 (PRLLSPGSRDLNGDADTEGKEGKNSDQASAGEKDLGR), and 3901–3936 (ASLAQHNHPPPHHPQQQHHQQQQMNLQLQQHQAPPV). Residues 3176 to 3191 (KHADLAEREAQVQEER) are compositionally biased toward basic and acidic residues. Over residues 3192–3210 (EKEEEQVDDEDADDREPEQ) the composition is skewed to acidic residues. Polar residues predominate over residues 3282–3292 (PRGNGNRSQQE). Over residues 3348 to 3371 (TTTGQGEQQSELQLATTSTASSAS) the composition is skewed to low complexity. A compositionally biased stretch (low complexity) spans 3917–3932 (QHHQQQQMNLQLQQHQ). Residues 4195–4374 (HNQVHSVATG…KHQPHLRLSH (180 aa)) enclose the DOC domain. Disordered stretches follow at residues 4633–4655 (ASTGPSGSGGVSGSSSGNGGAVL) and 4680–4702 (LRSRPPTGEPGTTDPFQFDALPP). The segment covering 4638-4652 (SGSGGVSGSSSGNGG) has biased composition (gly residues). Zn(2+) is bound by residues Cys-4991, Cys-4994, Cys-5009, His-5011, His-5014, Cys-5017, Cys-5038, Cys-5041, Cys-5101, and Cys-5104. The RING-type; atypical zinc finger occupies 4991 to 5042 (CMICFVEALSCAPSIHLECGHVFHYHCCKAVLEKRWSGPRITFGFSLCPICK). A tandem cysteine domain region spans residues 5096–5231 (YAYYVCFKCQ…LGCGVCRNAQ (136 aa)). Cys-5115 is an active-site residue. Positions 5130, 5133, 5142, 5145, 5154, 5157, and 5158 each coordinate Zn(2+). Cys-5165 is a catalytic residue. Residues Cys-5172, Cys-5175, Cys-5193, Cys-5207, His-5213, Cys-5224, and Cys-5227 each contribute to the Zn(2+) site.

This sequence belongs to the RING-Cys relay (RCR) family. In terms of assembly, component of an E3 ubiquitin ligase complex composed of hiw, Rae1 and Fsn. Interacts with Rae1; the interaction with Rae1 may protect hiw from autophagy-mediated degradation. As to expression, express throughout the nervous system. Stage 13 embryos show expression in the central nervous system (CNS) at the longitudinal axon tracts around which the synaptic neuropil forms. Expression outside the CNS starts at stage 16 in presynaptic terminals at the periactive zone which surround the active zone. Expression at neuromuscular junctions (NMJ) and in the CNS is also seen in third instar larvae (at protein level).

Its subcellular location is the synapse. The protein localises to the cell projection. The protein resides in the axon. The catalysed reaction is [E2 ubiquitin-conjugating enzyme]-S-ubiquitinyl-L-cysteine + [acceptor protein]-L-threonine = [E2 ubiquitin-conjugating enzyme]-L-cysteine + [acceptor protein]-3-O-ubiquitinyl-L-threonine.. It functions in the pathway protein modification; protein ubiquitination. Atypical E3 ubiquitin-protein ligase which specifically mediates ubiquitination of threonine and serine residues on target proteins, instead of ubiquitinating lysine residues. Shows esterification activity towards both threonine and serine, with a preference for threonine, and acts via two essential catalytic cysteine residues that relay ubiquitin to its substrate via thioester intermediates. Required in the presynaptic motoneuron to down-regulate the levels of wnd and restrain synaptic terminal growth at the neuromuscular junction (NMJ) together with Rae1 and Fsn. In Drosophila melanogaster (Fruit fly), this protein is E3 ubiquitin-protein ligase highwire.